The sequence spans 335 residues: Beta-ketoacyl-[acyl-carrier-protein] synthase III (335 aa).

Residues Cys-119 and His-261 contribute to the active site. The tract at residues 262–266 (QANQR) is ACP-binding. Residue Asn-291 is part of the active site.

This sequence belongs to the thiolase-like superfamily. FabH family. As to quaternary structure, homodimer.

Its subcellular location is the cytoplasm. It catalyses the reaction malonyl-[ACP] + acetyl-CoA + H(+) = 3-oxobutanoyl-[ACP] + CO2 + CoA. It participates in lipid metabolism; fatty acid biosynthesis. Catalyzes the condensation reaction of fatty acid synthesis by the addition to an acyl acceptor of two carbons from malonyl-ACP. Catalyzes the first condensation reaction which initiates fatty acid synthesis and may therefore play a role in governing the total rate of fatty acid production. Possesses both acetoacetyl-ACP synthase and acetyl transacylase activities. Its substrate specificity determines the biosynthesis of branched-chain and/or straight-chain of fatty acids. The chain is Beta-ketoacyl-[acyl-carrier-protein] synthase III from Prochlorococcus marinus (strain MIT 9301).